The following is a 1299-amino-acid chain: Protein prickle (1299 aa).

The segment covering 1–19 has biased composition (gly residues); it reads MSSLSTGGGAGGSSGGPGG. 5 disordered regions span residues 1–24, 115–181, 241–289, 368–396, and 425–527; these read MSSL…DAAA, ADDG…EVTQ, EEES…PQVP, LPRH…PSSS, and LPPH…DDDS. Basic residues predominate over residues 145 to 159; the sequence is SPRRSKKLLRSLRAH. Residues 168–181 are compositionally biased toward polar residues; the sequence is NDTTTANESSEVTQ. The span at 263-272 shows a compositional bias: pro residues; sequence PVPPLPPPPA. Over residues 425–434 the composition is skewed to low complexity; that stretch reads LPPHHQQHPG. Residues 435-445 are compositionally biased toward gly residues; that stretch reads AGMGPGPGSGA. Residues 457–469 show a composition bias toward polar residues; that stretch reads PGCSANPKYSNAQ. Positions 515–623 constitute a PET domain; sequence MDMQRQSHSD…NVRQLMSARP (109 aa). The span at 516–525 shows a compositional bias: basic and acidic residues; sequence DMQRQSHSDD. 3 LIM zinc-binding domains span residues 622–686, 687–747, and 748–810; these read RPCD…ETLK, PRCS…MFAE, and YCDY…GEPP. 3 disordered regions span residues 807–865, 902–940, and 1026–1249; these read GEPP…HQAT, KDLE…GDFQ, and ADIL…SSSS. Residues 844 to 864 show a composition bias toward low complexity; it reads PSSHASSSPPMSPQQQQQHQA. Polar residues-rich tracts occupy residues 922–934 and 1070–1081; these read RASS…SPLN and SLNTPMSTQSAS. The segment covering 1089-1101 has biased composition (low complexity); that stretch reads SILSGASSSSPMS. A compositionally biased stretch (basic and acidic residues) spans 1136-1150; the sequence is GERERDRDKDKEGGG. Over residues 1151–1183 the composition is skewed to basic residues; that stretch reads RHGHGHSSRRRRRRKSSSSSSHHRSGSGHRSHS. Positions 1216 to 1231 are enriched in basic and acidic residues; the sequence is SPSRQQRERERERERE. Positions 1238–1249 are enriched in low complexity; it reads VCSTCSSSSSSS.

Belongs to the prickle / espinas / testin family. As to quaternary structure, interacts with dsh; PET and LIM domains interact with dsh DEP domain, in wing cells. Interacts with Vang in photoreceptor cells. Expressed in the wing, leg and eye imaginal disks. Expressed within the photoreceptors of the eye.

It localises to the cell membrane. In terms of biological role, acts in a planar cell polarity (PCP) complex; polarization along the apical/basal axis of epithelial cells. Correct expression of the alternative isoforms is required for PCP signaling in imaginal disks. PCP signaling in the wing disk requires the receptor fz and the cytoplasmic proteins dsh and pk. These act in a feedback loop leading to activation of the jnk cascade and subsequent polarized arrangement of hairs and bristles. Dgo and pk compete with one another for dsh binding, thereby modulating fz dsh activity and ensuring tight control over fz PCP signaling. Vang, stan and pk function together to regulate the establishment of tissue polarity in the adult eye. This is Protein prickle from Drosophila melanogaster (Fruit fly).